The chain runs to 312 residues: Pre-mRNA-splicing factor 38A (312 aa).

Positions 1 to 179 are N-terminal protein interaction domain; the sequence is MANRTVKDAH…VLEETEQLDP (179 aa). The segment at 180 to 312 is disordered; sequence RVSALEEDMD…SHKKSRRGNE (133 aa). Acidic residues predominate over residues 184–201; sequence LEEDMDDVESSEEEEDED. Basic and acidic residues predominate over residues 202-223; it reads EKGRDPSPEHHRRNYRDLDRPR. Basic residues-rich tracts occupy residues 224–294 and 301–312; these read RSPS…RSHS and KKSHKKSRRGNE.

This sequence belongs to the PRP38 family. Component of the spliceosome B complex.

It is found in the nucleus. Functionally, involved in pre-mRNA splicing as a component of the spliceosome. This is Pre-mRNA-splicing factor 38A (prpf38a) from Xenopus tropicalis (Western clawed frog).